Consider the following 513-residue polypeptide: ATP synthase subunit alpha (513 aa).

An ATP-binding site is contributed by 169–176 (GDRQTGKT).

It belongs to the ATPase alpha/beta chains family. As to quaternary structure, F-type ATPases have 2 components, CF(1) - the catalytic core - and CF(0) - the membrane proton channel. CF(1) has five subunits: alpha(3), beta(3), gamma(1), delta(1), epsilon(1). CF(0) has three main subunits: a(1), b(2) and c(9-12). The alpha and beta chains form an alternating ring which encloses part of the gamma chain. CF(1) is attached to CF(0) by a central stalk formed by the gamma and epsilon chains, while a peripheral stalk is formed by the delta and b chains.

The protein localises to the cell inner membrane. The enzyme catalyses ATP + H2O + 4 H(+)(in) = ADP + phosphate + 5 H(+)(out). Produces ATP from ADP in the presence of a proton gradient across the membrane. The alpha chain is a regulatory subunit. This is ATP synthase subunit alpha from Enterobacter sp. (strain 638).